The chain runs to 572 residues: Proline--tRNA ligase (572 aa).

This sequence belongs to the class-II aminoacyl-tRNA synthetase family. ProS type 1 subfamily. Homodimer.

The protein localises to the cytoplasm. It carries out the reaction tRNA(Pro) + L-proline + ATP = L-prolyl-tRNA(Pro) + AMP + diphosphate. In terms of biological role, catalyzes the attachment of proline to tRNA(Pro) in a two-step reaction: proline is first activated by ATP to form Pro-AMP and then transferred to the acceptor end of tRNA(Pro). As ProRS can inadvertently accommodate and process non-cognate amino acids such as alanine and cysteine, to avoid such errors it has two additional distinct editing activities against alanine. One activity is designated as 'pretransfer' editing and involves the tRNA(Pro)-independent hydrolysis of activated Ala-AMP. The other activity is designated 'posttransfer' editing and involves deacylation of mischarged Ala-tRNA(Pro). The misacylated Cys-tRNA(Pro) is not edited by ProRS. The protein is Proline--tRNA ligase of Erwinia tasmaniensis (strain DSM 17950 / CFBP 7177 / CIP 109463 / NCPPB 4357 / Et1/99).